The primary structure comprises 432 residues: Phosphomethylpyrimidine synthase (432 aa).

Residues Asn-66, Met-95, Tyr-124, His-163, 185–187, 226–229, and Glu-265 each bind substrate; these read SRG and DGLR. Residue His-269 coordinates Zn(2+). Tyr-292 contacts substrate. His-333 is a Zn(2+) binding site. Residues Cys-409, Cys-412, and Cys-416 each coordinate [4Fe-4S] cluster.

The protein belongs to the ThiC family. Requires [4Fe-4S] cluster as cofactor.

It carries out the reaction 5-amino-1-(5-phospho-beta-D-ribosyl)imidazole + S-adenosyl-L-methionine = 4-amino-2-methyl-5-(phosphooxymethyl)pyrimidine + CO + 5'-deoxyadenosine + formate + L-methionine + 3 H(+). The protein operates within cofactor biosynthesis; thiamine diphosphate biosynthesis. Its function is as follows. Catalyzes the synthesis of the hydroxymethylpyrimidine phosphate (HMP-P) moiety of thiamine from aminoimidazole ribotide (AIR) in a radical S-adenosyl-L-methionine (SAM)-dependent reaction. In Moorella thermoacetica (strain ATCC 39073 / JCM 9320), this protein is Phosphomethylpyrimidine synthase.